The sequence spans 126 residues: Probable 4-amino-4-deoxy-L-arabinose-phosphoundecaprenol flippase subunit ArnF (126 aa).

Residues 1 to 21 traverse the membrane as a helical segment; that stretch reads MGFFWALLSVGLVSAAQLLLR. Residues 22-47 are Periplasmic-facing; sequence SAMVALPPLTDIVAFLQHLLHFQPGT. The helical transmembrane segment at 48–68 threads the bilayer; it reads FGLFFGLLGYLLSMVCWYFAL. Residues 69–76 are Cytoplasmic-facing; it reads HRLPLSKA. The chain crosses the membrane as a helical span at residues 77–97; sequence YALLSLSYILVWAAAIWLPGW. The Periplasmic segment spans residues 98–100; the sequence is HEP. A helical transmembrane segment spans residues 101–121; that stretch reads FYWQSLLGVAIIVAGVLTIFW. The Cytoplasmic segment spans residues 122–126; that stretch reads PVKRR.

This sequence belongs to the ArnF family. In terms of assembly, heterodimer of ArnE and ArnF.

Its subcellular location is the cell inner membrane. It participates in bacterial outer membrane biogenesis; lipopolysaccharide biosynthesis. In terms of biological role, translocates 4-amino-4-deoxy-L-arabinose-phosphoundecaprenol (alpha-L-Ara4N-phosphoundecaprenol) from the cytoplasmic to the periplasmic side of the inner membrane. This chain is Probable 4-amino-4-deoxy-L-arabinose-phosphoundecaprenol flippase subunit ArnF, found in Klebsiella pneumoniae subsp. pneumoniae (strain ATCC 700721 / MGH 78578).